Reading from the N-terminus, the 148-residue chain is Protoporphyrinogen IX oxidase (148 aa).

4 consecutive transmembrane segments (helical) span residues 7–27, 59–79, 86–106, and 128–148; these read YFLWVKAFHVIAVISWMAALF, FIASPAMGFTLITGILMLLIA, GGWLHAKLALVVLLLIYHFYC, and FNEIPTILMILIVILVVVKPF. His15 is a heme binding site. Heme is bound at residue Lys92.

The protein belongs to the HemJ family. Homodimer. The cofactor is heme b.

The protein resides in the cell membrane. It catalyses the reaction protoporphyrinogen IX + 3 A = protoporphyrin IX + 3 AH2. It participates in porphyrin-containing compound metabolism; protoporphyrin-IX biosynthesis; protoporphyrin-IX from protoporphyrinogen-IX: step 1/1. In terms of biological role, catalyzes the oxidation of protoporphyrinogen IX to protoporphyrin IX. Is involved in the biosynthesis of tetrapyrrole molecules like heme. Does not use oxygen or artificial electron acceptors such as menadione or benzoquinone. The sequence is that of Protoporphyrinogen IX oxidase from Helicobacter pylori (strain J99 / ATCC 700824) (Campylobacter pylori J99).